We begin with the raw amino-acid sequence, 113 residues long: MRKNNILLDDAKIYTNKLYLLLIDRKDDAGYGDICDVLFQVSKKLDSTKNVEALINRLVNYIRITASTNRIKFSKDEEAVIIELGVIGQKAGLNGQYMADFSDKSQFYSIFER.

Belongs to the immunity protein EntA family.

Its function is as follows. Imparts immunity to leucocin-A to naturally sensitive host strains. The sequence is that of Probable leucocin-A immunity protein from Leuconostoc gelidum.